The following is a 101-amino-acid chain: Cilia- and flagella-associated protein 141 (101 aa).

In terms of assembly, microtubule inner protein component of sperm flagellar doublet microtubules. As to expression, expressed in trachea multiciliated cells.

Its subcellular location is the cytoplasm. It is found in the cytoskeleton. It localises to the cilium axoneme. The protein localises to the flagellum axoneme. Microtubule inner protein (MIP) part of the dynein-decorated doublet microtubules (DMTs) in cilia axoneme, which is required for motile cilia beating. This Bos taurus (Bovine) protein is Cilia- and flagella-associated protein 141.